Here is an 83-residue protein sequence, read N- to C-terminus: Large ribosomal subunit protein eL43 (83 aa).

Zn(2+) is bound by residues Cys38, Cys41, Cys56, and Cys59. The C4-type zinc-finger motif lies at 38–59 (CKKCGKKAVKRSGTGIWECRHC).

The protein belongs to the eukaryotic ribosomal protein eL43 family. Putative zinc-binding subfamily. Part of the 50S ribosomal subunit. Zn(2+) is required as a cofactor.

Functionally, binds to the 23S rRNA. The chain is Large ribosomal subunit protein eL43 from Archaeoglobus fulgidus (strain ATCC 49558 / DSM 4304 / JCM 9628 / NBRC 100126 / VC-16).